The following is a 514-amino-acid chain: Protein spinster homolog 3 (514 aa).

Residues 1 to 22 form a disordered region; that stretch reads MSTECLKPQTGGPQSQSLSQGG. The span at 9–21 shows a compositional bias: low complexity; that stretch reads QTGGPQSQSLSQG. 12 consecutive transmembrane segments (helical) span residues 54 to 74, 88 to 108, 116 to 136, 149 to 169, 176 to 196, 212 to 232, 264 to 284, 313 to 333, 347 to 367, 376 to 396, 415 to 435, and 453 to 473; these read VLCYINLLNYMNWFIIPGVLL, GLLQTVFISCLLVSAPVFGYL, AILSFGILLWSGAGLSSSFIS, FVGTGAASYSTIAPTVLGDLF, CALAVFYIFIPVGSGLGYVLG, LMPCLDAMALALLILLVPDVP, FVFSTLGVTAIAFVTGALGFW, LIFGALTVATGIIGVMLGAEA, LICASSLFATAPCLYLALILA, VFLALGELLLSCNWAVVADIL, VAHVLGDAGSPYLTGLISSVL, and SFLCCAFAIVLGGGFFLLTAL. The disordered stretch occupies residues 482–514; the sequence is ARQPGKGTLDSKDIASRNTESQGLLSGTSTPTE. The segment covering 497 to 514 has biased composition (polar residues); the sequence is SRNTESQGLLSGTSTPTE.

It belongs to the major facilitator superfamily. Spinster (TC 2.A.1.49) family.

It localises to the membrane. Functionally, sphingolipid transporter. The sequence is that of Protein spinster homolog 3 (Spns3) from Mus musculus (Mouse).